Here is a 576-residue protein sequence, read N- to C-terminus: DNA mismatch repair protein MutL (576 aa).

Belongs to the DNA mismatch repair MutL/HexB family.

Functionally, this protein is involved in the repair of mismatches in DNA. It is required for dam-dependent methyl-directed DNA mismatch repair. May act as a 'molecular matchmaker', a protein that promotes the formation of a stable complex between two or more DNA-binding proteins in an ATP-dependent manner without itself being part of a final effector complex. This chain is DNA mismatch repair protein MutL, found in Chlamydia trachomatis serovar A (strain ATCC VR-571B / DSM 19440 / HAR-13).